A 78-amino-acid polypeptide reads, in one-letter code: Putative DNA-binding protein MT0521 (78 aa).

Positions 24-45 form a DNA-binding region, H-T-H motif; it reads LLTVAEVAALMRVSKMTVYRLV.

The sequence is that of Putative DNA-binding protein MT0521 from Mycobacterium tuberculosis (strain CDC 1551 / Oshkosh).